We begin with the raw amino-acid sequence, 378 residues long: Forkhead box protein I1 (378 aa).

2 disordered regions span residues 1–26 and 208–278; these read MSSF…QEPP and DNGN…APCL. A DNA-binding region (fork-head) is located at residues 123 to 217; that stretch reads RPPYSYSALI…DNGNFRRKRK (95 aa). Over residues 236-248 the composition is skewed to polar residues; that stretch reads SSLPVDSPKTTEP.

As to expression, expressed in kidney.

The protein resides in the nucleus. Its function is as follows. Transcriptional activator required for the development of normal hearing, sense of balance and kidney function. Required for the expression of SLC26A4/PDS, JAG1 and COCH in a subset of epithelial cells and the development of the endolymphatic system in the inner ear. Also required for the expression of SLC4A1/AE1, SLC4A9/AE4, ATP6V1B1 and the differentiation of intercalated cells in the epithelium of distal renal tubules. The chain is Forkhead box protein I1 (FOXI1) from Homo sapiens (Human).